Consider the following 134-residue polypeptide: Profilin-4 (134 aa).

A disulfide bridge connects residues cysteine 13 and cysteine 118. The short motif at 84–100 (AVIRGKKGSGGITIKKT) is the Involved in PIP2 interaction element. At threonine 114 the chain carries Phosphothreonine.

It belongs to the profilin family. Occurs in many kinds of cells as a complex with monomeric actin in a 1:1 ratio. Post-translationally, phosphorylated by MAP kinases.

The protein resides in the cytoplasm. The protein localises to the cytoskeleton. Binds to actin and affects the structure of the cytoskeleton. At high concentrations, profilin prevents the polymerization of actin, whereas it enhances it at low concentrations. The protein is Profilin-4 of Olea europaea (Common olive).